Reading from the N-terminus, the 1673-residue chain is Leucine-rich repeat- and IQ domain-containing protein 1 (1673 aa).

2 disordered regions span residues 22–48 and 189–208; these read ISIS…SDTD and LEEK…KRTF. One copy of the LRR 1 repeat lies at 34 to 59; that stretch reads NDSVSDTQSDSSDTDLLELPESVLHY. Residues 216 to 239 form an LRR 2 repeat; the sequence is QCWMRQFEVEKKHLEDLQKQDQDK. One can recognise an IQ 1 domain in the interval 291-320; the sequence is RYDAAVKIQATYRASVTYRKYSPIIKEQME. Residues 324-374 are disordered; the sequence is RRAQELKEKEAKIRQKEEEKRRRLEEEQRVEEEKKKKMLEERRRREREYEE. The segment covering 326–374 has biased composition (basic and acidic residues); sequence AQELKEKEAKIRQKEEEKRRRLEEEQRVEEEKKKKMLEERRRREREYEE. The LRR 3 repeat unit spans residues 491–516; sequence LPKLKINENLSKNQCSEQPSDQEFNA. 2 disordered regions span residues 544-658 and 679-702; these read ESDT…EEIP and EGEA…GSHS. Composition is skewed to basic and acidic residues over residues 549-567 and 588-602; these read TEEH…ETEK and EETR…EIKE. Residues 603–629 are compositionally biased toward polar residues; sequence MTQQGGPSDENNSSPISMQKSLPSLTP. One copy of the LRR 4 repeat lies at 641-665; that stretch reads LEEDQETDLKSERIEEIPEEGVLSC. Positions 647-656 are enriched in basic and acidic residues; it reads TDLKSERIEE. 11 LRR repeats span residues 830 to 852, 853 to 873, 874 to 894, 895 to 919, 921 to 939, 940 to 961, 962 to 983, 984 to 1005, 1007 to 1029, 1030 to 1054, and 1067 to 1090; these read CSNL…LSHC, TRLK…CENL, ENLS…GFDG, CTNL…SLKY, QELT…LCEA, PTIV…IGNC, GLLQ…LRNH, VLLR…LSSC, LPLL…LFHL, VSLE…WFNA, and PVLQ…VLNG. Disordered stretches follow at residues 1163 to 1230 and 1308 to 1330; these read AHEQ…HCEE and PTTT…EERR. Polar residues-rich tracts occupy residues 1168–1226 and 1308–1325; these read DVNT…PSTS and PTTT…QTTS. IQ domains follow at residues 1280 to 1309 and 1340 to 1369; these read PTKA…MHPT and REKA…AIKD. The LRR 16 repeat unit spans residues 1378 to 1405; the sequence is EIDLEDFEFDEDALEKDWPALDSTGFPS.

This is Leucine-rich repeat- and IQ domain-containing protein 1 (Lrriq1) from Mus musculus (Mouse).